Reading from the N-terminus, the 366-residue chain is Spermidine/putrescine import ATP-binding protein PotA (366 aa).

In terms of domain architecture, ABC transporter spans 14–247; it reads ISARALRKVY…PADRFVADFI (234 aa). 49-56 is an ATP binding site; that stretch reads GPSGCGKT.

This sequence belongs to the ABC transporter superfamily. Spermidine/putrescine importer (TC 3.A.1.11.1) family. As to quaternary structure, the complex is composed of two ATP-binding proteins (PotA), two transmembrane proteins (PotB and PotC) and a solute-binding protein (PotD).

The protein resides in the cell inner membrane. It catalyses the reaction ATP + H2O + polyamine-[polyamine-binding protein]Side 1 = ADP + phosphate + polyamineSide 2 + [polyamine-binding protein]Side 1.. In terms of biological role, part of the ABC transporter complex PotABCD involved in spermidine/putrescine import. Responsible for energy coupling to the transport system. This chain is Spermidine/putrescine import ATP-binding protein PotA, found in Ruegeria pomeroyi (strain ATCC 700808 / DSM 15171 / DSS-3) (Silicibacter pomeroyi).